The sequence spans 261 residues: Triosephosphate isomerase (261 aa).

Residue 10–12 (NWK) coordinates substrate. His-100 serves as the catalytic Electrophile. Glu-172 acts as the Proton acceptor in catalysis. Substrate contacts are provided by residues Gly-178, Ser-218, and 239 to 240 (GG).

Belongs to the triosephosphate isomerase family. As to quaternary structure, homodimer.

The protein resides in the cytoplasm. The catalysed reaction is D-glyceraldehyde 3-phosphate = dihydroxyacetone phosphate. It participates in carbohydrate biosynthesis; gluconeogenesis. Its pathway is carbohydrate degradation; glycolysis; D-glyceraldehyde 3-phosphate from glycerone phosphate: step 1/1. In terms of biological role, involved in the gluconeogenesis. Catalyzes stereospecifically the conversion of dihydroxyacetone phosphate (DHAP) to D-glyceraldehyde-3-phosphate (G3P). The chain is Triosephosphate isomerase from Mycobacterium leprae (strain TN).